The primary structure comprises 430 residues: Trigger factor (430 aa).

The PPIase FKBP-type domain maps to 163 to 248; the sequence is GNIAIIDFKG…IKDIKVKELP (86 aa).

It belongs to the FKBP-type PPIase family. Tig subfamily.

The protein localises to the cytoplasm. The catalysed reaction is [protein]-peptidylproline (omega=180) = [protein]-peptidylproline (omega=0). Involved in protein export. Acts as a chaperone by maintaining the newly synthesized protein in an open conformation. Functions as a peptidyl-prolyl cis-trans isomerase. The protein is Trigger factor of Clostridium botulinum (strain Loch Maree / Type A3).